The chain runs to 112 residues: UPF0102 protein Cla_1413 (112 aa).

The protein belongs to the UPF0102 family.

This chain is UPF0102 protein Cla_1413, found in Campylobacter lari (strain RM2100 / D67 / ATCC BAA-1060).